We begin with the raw amino-acid sequence, 406 residues long: COP9 signalosome complex subunit 4 (406 aa).

The residue at position 2 (Ala-2) is an N-acetylalanine. Position 25 is an N6-acetyllysine (Lys-25). The region spanning 197–366 (YRRKFIEAAQ…GIVHFETREA (170 aa)) is the PCI domain.

This sequence belongs to the CSN4 family. In terms of assembly, component of the CSN complex, composed of COPS1/GPS1, COPS2, COPS3, COPS4, COPS5, COPS6, COPS7 (COPS7A or COPS7B), COPS8 and COPS9. In the complex, it probably interacts directly with COPS1, COPS2, COPS3, COPS5, COPS6, COPS7 (COPS7A or COPS7B) and COPS8. Interacts with TOR1A; the interaction is direct and associates TOR1A and SNAPIN with the CSN complex. Interacts with STON2; controls STON2 neddylation levels. Interacts with ERCC6.

The protein resides in the cytoplasm. It localises to the nucleus. It is found in the cytoplasmic vesicle. The protein localises to the secretory vesicle. Its subcellular location is the synaptic vesicle. Component of the COP9 signalosome complex (CSN), a complex involved in various cellular and developmental processes. The CSN complex is an essential regulator of the ubiquitin (Ubl) conjugation pathway by mediating the deneddylation of the cullin subunits of SCF-type E3 ligase complexes, leading to decrease the Ubl ligase activity of SCF-type complexes such as SCF, CSA or DDB2. Also involved in the deneddylation of non-cullin subunits such as STON2. The complex is also involved in phosphorylation of p53/TP53, c-jun/JUN, IkappaBalpha/NFKBIA, ITPK1, IRF8/ICSBP and SNAPIN, possibly via its association with CK2 and PKD kinases. CSN-dependent phosphorylation of TP53 and JUN promotes and protects degradation by the Ubl system, respectively. The protein is COP9 signalosome complex subunit 4 (Cops4) of Rattus norvegicus (Rat).